Here is a 195-residue protein sequence, read N- to C-terminus: Imidazoleglycerol-phosphate dehydratase (195 aa).

Belongs to the imidazoleglycerol-phosphate dehydratase family.

The protein resides in the cytoplasm. The catalysed reaction is D-erythro-1-(imidazol-4-yl)glycerol 3-phosphate = 3-(imidazol-4-yl)-2-oxopropyl phosphate + H2O. It participates in amino-acid biosynthesis; L-histidine biosynthesis; L-histidine from 5-phospho-alpha-D-ribose 1-diphosphate: step 6/9. The polypeptide is Imidazoleglycerol-phosphate dehydratase (Paraburkholderia xenovorans (strain LB400)).